Reading from the N-terminus, the 166-residue chain is Ribosome-binding factor A (166 aa).

The disordered stretch occupies residues 122–166; it reads HVADETDVEDSTDHEDDVTNSEDETKHVDIDTDSEEGTNTDGKAQ. Acidic residues predominate over residues 126-143; sequence ETDVEDSTDHEDDVTNSE.

This sequence belongs to the RbfA family. As to quaternary structure, monomer. Binds 30S ribosomal subunits, but not 50S ribosomal subunits or 70S ribosomes.

It is found in the cytoplasm. One of several proteins that assist in the late maturation steps of the functional core of the 30S ribosomal subunit. Associates with free 30S ribosomal subunits (but not with 30S subunits that are part of 70S ribosomes or polysomes). Required for efficient processing of 16S rRNA. May interact with the 5'-terminal helix region of 16S rRNA. This is Ribosome-binding factor A from Pseudoalteromonas translucida (strain TAC 125).